Here is a 335-residue protein sequence, read N- to C-terminus: Glycerol-3-phosphate dehydrogenase [NAD(P)+] (335 aa).

Residues Ser15, Tyr16, Arg36, and Lys110 each contribute to the NADPH site. The sn-glycerol 3-phosphate site is built by Lys110, Gly139, and Thr141. Ala143 contacts NADPH. Residues Lys195, Asp248, Ser258, Arg259, and Asn260 each coordinate sn-glycerol 3-phosphate. Catalysis depends on Lys195, which acts as the Proton acceptor. Arg259 contacts NADPH. The NADPH site is built by Val283 and Glu285.

Belongs to the NAD-dependent glycerol-3-phosphate dehydrogenase family.

It localises to the cytoplasm. It catalyses the reaction sn-glycerol 3-phosphate + NAD(+) = dihydroxyacetone phosphate + NADH + H(+). It carries out the reaction sn-glycerol 3-phosphate + NADP(+) = dihydroxyacetone phosphate + NADPH + H(+). It functions in the pathway membrane lipid metabolism; glycerophospholipid metabolism. In terms of biological role, catalyzes the reduction of the glycolytic intermediate dihydroxyacetone phosphate (DHAP) to sn-glycerol 3-phosphate (G3P), the key precursor for phospholipid synthesis. The chain is Glycerol-3-phosphate dehydrogenase [NAD(P)+] from Pseudoalteromonas translucida (strain TAC 125).